Here is a 332-residue protein sequence, read N- to C-terminus: Capsular polysaccharide phosphotransferase WcwK (332 aa).

Belongs to the stealth family.

The chain is Capsular polysaccharide phosphotransferase WcwK (wcwK) from Streptococcus pneumoniae.